The following is a 210-amino-acid chain: Protein PF1979 (210 aa).

Positions 7–201 constitute an AMMECR1 domain; it reads EWGEFLVRLA…EEYPRGPVKR (195 aa).

The polypeptide is Protein PF1979 (Pyrococcus furiosus (strain ATCC 43587 / DSM 3638 / JCM 8422 / Vc1)).